The following is a 455-amino-acid chain: MKTTKILLHTGVLALSLLATQVMAAVSADEAAKLGTSLTPLGAEKAGNADGSIPAWDGGLATNAGSVDSRGFLANPYASEQPLFTITAQNVDQYKDKLTPGQLAMFKRYPDTYKIPVYKTHRSATVPAAVQEAAKRNATTTKLVEGGNGLENFDTANPFPIPQNGLEVIWNHITRYRGGSVRRLVTQATPQVNGSYQLVYFQDAFTFRTNLKDYNPNKPSNVLFYFKQRVTAPSRLAGNVLLVHETLNQVKEPRLAWLYNAGQRRVRRAPQVSYDGPGTAADGLRTSDNFDMYNGAPDRYDWKLEGKKEIYIPYNSYKLDDPKIKYSEIVKAGHINQDLTRYELHRVWHVVATLKPGERHIYAKRDFYIDEDTWQAAEIDHYDGRGTLWRVAEAHAEQYYDKQVPWYAVETLYDLLSGRYLALGMKNEEKQAYDFNYSASESDYTPAALRQEGVR.

Residues 1 to 24 form the signal peptide; the sequence is MKTTKILLHTGVLALSLLATQVMA.

This is an uncharacterized protein from Pseudomonas aeruginosa (strain ATCC 15692 / DSM 22644 / CIP 104116 / JCM 14847 / LMG 12228 / 1C / PRS 101 / PAO1).